We begin with the raw amino-acid sequence, 419 residues long: Gamma-glutamyl phosphate reductase (419 aa).

It belongs to the gamma-glutamyl phosphate reductase family.

The protein resides in the cytoplasm. The enzyme catalyses L-glutamate 5-semialdehyde + phosphate + NADP(+) = L-glutamyl 5-phosphate + NADPH + H(+). It functions in the pathway amino-acid biosynthesis; L-proline biosynthesis; L-glutamate 5-semialdehyde from L-glutamate: step 2/2. In terms of biological role, catalyzes the NADPH-dependent reduction of L-glutamate 5-phosphate into L-glutamate 5-semialdehyde and phosphate. The product spontaneously undergoes cyclization to form 1-pyrroline-5-carboxylate. The chain is Gamma-glutamyl phosphate reductase from Azobacteroides pseudotrichonymphae genomovar. CFP2.